Reading from the N-terminus, the 322-residue chain is uncharacterized protein (322 aa).

It to M.jannaschii MJ0640 and MJ0799.

This is an uncharacterized protein from Synechocystis sp. (strain ATCC 27184 / PCC 6803 / Kazusa).